Reading from the N-terminus, the 870-residue chain is NEDD4-like E3 ubiquitin-protein ligase WWP2 (870 aa).

The region spanning 1–117 (MASASSSRAG…KNNGGKMENT (117 aa)) is the C2 domain. Residues 150 to 300 (SVPNGSAVTD…QLPAAAQAPD (151 aa)) form a disordered region. Residues 152-171 (PNGSAVTDGSQPPSRESSGT) show a composition bias toward polar residues. The span at 198–208 (GGSARTATAAS) shows a compositional bias: low complexity. S211 is modified (phosphoserine). Composition is skewed to polar residues over residues 222–235 (VKNS…NGTV) and 262–289 (SVSS…TSGT). Low complexity predominate over residues 290-300 (QQLPAAAQAPD). 4 WW domains span residues 300–333 (DALP…RPLP), 330–363 (RPLP…RPTA), 405–437 (GPLP…DPRT), and 444–477 (PALP…DPRP). Positions 536 to 870 (KPYDLRRRLY…IEETEGFGQE (335 aa)) constitute an HECT domain. The active-site Glycyl thioester intermediate is the C838.

As to quaternary structure, interacts with SCNN1A, SCNN1B, SCNN1G, WBP1, WBP2 and ATN1. Interacts with ERBB4, NDFIP1 and NDFIP2. Interacts with ARRDC4. Interacts with POU5F1, RBP1, EGR2 and SLC11A2. Interacts (via WW domains) with ARRDC1 (via PPxY motifs); ubiquitinates ARRDC1. Interacts (via WW domains) with ARRDC2 and ARRDC3. Post-translationally, autoubiquitinated. Ubiquitinated by the SCF(FBXL15) complex, leading to its degradation by the proteasome.

It is found in the nucleus. The catalysed reaction is S-ubiquitinyl-[E2 ubiquitin-conjugating enzyme]-L-cysteine + [acceptor protein]-L-lysine = [E2 ubiquitin-conjugating enzyme]-L-cysteine + N(6)-ubiquitinyl-[acceptor protein]-L-lysine.. It functions in the pathway protein modification; protein ubiquitination. Its activity is regulated as follows. Activated by NDFIP1- and NDFIP2-binding. In terms of biological role, E3 ubiquitin-protein ligase which accepts ubiquitin from an E2 ubiquitin-conjugating enzyme in the form of a thioester and then directly transfers the ubiquitin to targeted substrates. Polyubiquitinates POU5F1 by 'Lys-63'-linked conjugation and promotes it to proteasomal degradation; regulates POU5F1 protein level during differentiation of embryonal carcinoma cells (ECCs) but not in undifferentiated ECCs and embryonic stem cells (ESCs). Ubiquitinates EGR2 and promotes it to proteasomal degradation; in T-cells the ubiquitination inhibits activation-induced cell death. Ubiquitinates SLC11A2; the ubiquitination is enhanced by presence of NDFIP1 and NDFIP2. Ubiquitinates RPB1 and promotes it to proteasomal degradation. In Mus musculus (Mouse), this protein is NEDD4-like E3 ubiquitin-protein ligase WWP2 (Wwp2).